Reading from the N-terminus, the 1017-residue chain is Ubiquitin-like modifier-activating enzyme 1 (1017 aa).

A run of 2 repeats spans residues 26 to 163 (SHET…GQLF) and 419 to 571 (GKTL…QVVV). Residues 26–571 (SHETMKKITS…GTKGNTQVVV (546 aa)) form a 2 approximate repeats region. ATP is bound by residues Ala-438, Asp-464, Arg-475, Lys-488, and 536 to 537 (DN). The active-site Glycyl thioester intermediate is the Cys-592. Positions 765–781 (IQTSENEPAPSSNTQQA) are enriched in polar residues. Residues 765–788 (IQTSENEPAPSSNTQQAGGDAEDD) form a disordered region.

The protein belongs to the ubiquitin-activating E1 family. Monomer.

It catalyses the reaction ATP + ubiquitin + [E1 ubiquitin-activating enzyme]-L-cysteine = AMP + diphosphate + S-ubiquitinyl-[E1 ubiquitin-activating enzyme]-L-cysteine.. It participates in protein modification; protein ubiquitination. In terms of biological role, catalyzes the first step in ubiquitin conjugation to mark cellular proteins for degradation through the ubiquitin-proteasome system. Activates ubiquitin by first adenylating its C-terminal glycine residue with ATP, and thereafter linking this residue to the side chain of a cysteine residue in E1, yielding a ubiquitin-E1 thioester and free AMP. The polypeptide is Ubiquitin-like modifier-activating enzyme 1 (uba1) (Dictyostelium discoideum (Social amoeba)).